Reading from the N-terminus, the 298-residue chain is Ethanolamine ammonia-lyase small subunit (298 aa).

Adenosylcob(III)alamin is bound by residues Val-210, Glu-231, and Cys-261.

It belongs to the EutC family. As to quaternary structure, the basic unit is a heterodimer which dimerizes to form tetramers. The heterotetramers trimerize; 6 large subunits form a core ring with 6 small subunits projecting outwards. Adenosylcob(III)alamin serves as cofactor.

It localises to the bacterial microcompartment. The enzyme catalyses ethanolamine = acetaldehyde + NH4(+). Its pathway is amine and polyamine degradation; ethanolamine degradation. In terms of biological role, catalyzes the deamination of various vicinal amino-alcohols to oxo compounds. Allows this organism to utilize ethanolamine as the sole source of nitrogen and carbon in the presence of external vitamin B12. This Salmonella typhi protein is Ethanolamine ammonia-lyase small subunit.